A 434-amino-acid chain; its full sequence is D-inositol 3-phosphate glycosyltransferase (434 aa).

Residue H26 participates in 1D-myo-inositol 3-phosphate binding. UDP-N-acetyl-alpha-D-glucosamine contacts are provided by residues 32–33 (QP) and G40. Residues 37–42 (DAGGMN), K95, Y128, T152, and R172 each bind 1D-myo-inositol 3-phosphate. UDP-N-acetyl-alpha-D-glucosamine is bound by residues R246 and K251. Residues Y321, R322, and A324 each coordinate Mg(2+). UDP-N-acetyl-alpha-D-glucosamine-binding residues include E334 and E342. T348 lines the Mg(2+) pocket.

It belongs to the glycosyltransferase group 1 family. MshA subfamily. Homodimer.

The enzyme catalyses 1D-myo-inositol 3-phosphate + UDP-N-acetyl-alpha-D-glucosamine = 1D-myo-inositol 2-acetamido-2-deoxy-alpha-D-glucopyranoside 3-phosphate + UDP + H(+). Functionally, catalyzes the transfer of a N-acetyl-glucosamine moiety to 1D-myo-inositol 3-phosphate to produce 1D-myo-inositol 2-acetamido-2-deoxy-glucopyranoside 3-phosphate in the mycothiol biosynthesis pathway. The protein is D-inositol 3-phosphate glycosyltransferase of Thermobifida fusca (strain YX).